Here is a 138-residue protein sequence, read N- to C-terminus: Thyrotropin subunit beta (138 aa).

A signal peptide spans 1-20 (MTAIYLMSMLFGLACGQAMS). Intrachain disulfides connect cysteine 22–cysteine 72, cysteine 36–cysteine 87, cysteine 39–cysteine 125, cysteine 47–cysteine 103, cysteine 51–cysteine 105, and cysteine 108–cysteine 115. N-linked (GlcNAc...) asparagine glycosylation is present at asparagine 43. Positions 133–138 (VVGFSI) are excised as a propeptide.

The protein belongs to the glycoprotein hormones subunit beta family. In terms of assembly, heterodimer of a common alpha chain and a unique beta chain which confers biological specificity to thyrotropin, lutropin, follitropin and gonadotropin.

The protein localises to the secreted. Its function is as follows. Indispensable for the control of thyroid structure and metabolism. This is Thyrotropin subunit beta (TSHB) from Canis lupus familiaris (Dog).